We begin with the raw amino-acid sequence, 103 residues long: Large ribosomal subunit protein bL21 (103 aa).

This sequence belongs to the bacterial ribosomal protein bL21 family. Part of the 50S ribosomal subunit. Contacts protein L20.

This protein binds to 23S rRNA in the presence of protein L20. The polypeptide is Large ribosomal subunit protein bL21 (Alcanivorax borkumensis (strain ATCC 700651 / DSM 11573 / NCIMB 13689 / SK2)).